A 492-amino-acid polypeptide reads, in one-letter code: MTLWINGDWITGQGASRVKRNPVSGEVLWQGNDADAAQVEQACRAARAAFPRWARLSLAERQVVVERFAGLLERNKGELTAIIARETGKPRWEAATEVTAMINKIAISIKAYHVRTGEQRSEMPDGAASLRHCPHGVLAVFGPYNFPGHLPNGHIVPALLAGNTIIFKPSELTPWSGEAVMRLWQQAGLPPGVLNLVQGGRETGQALSALEDLDGLLFTGSANTGYQLHRQLSGQPEKILALEMGGNNPLIIDEVADIDAAVHLTIQSAFVTAGQRCTCARRLLLKSGAQGDAFLARLVAVSQRLTPGNWDDEPQPFIGGLISEQAAQQVVTAWQQLEAMGGRTLLAPRLLQSETSLLTPGIIEMTGVAGVPDEEVFGPLLRVWRYDSFEEAILMANNTRFGLSCGLVSPEREKFDQLLLEARAGIVNWNKPLTGAASTAPFGGIGASGNHRPSAWYAADYCAWPMASLESDSLTLPATLNPGLDFSDEVVR.

220–225 (GSANTG) lines the NAD(+) pocket. Residues Glu243 and Cys277 contribute to the active site.

The protein belongs to the aldehyde dehydrogenase family. AstD subfamily.

The catalysed reaction is N-succinyl-L-glutamate 5-semialdehyde + NAD(+) + H2O = N-succinyl-L-glutamate + NADH + 2 H(+). It participates in amino-acid degradation; L-arginine degradation via AST pathway; L-glutamate and succinate from L-arginine: step 4/5. Its function is as follows. Catalyzes the NAD-dependent reduction of succinylglutamate semialdehyde into succinylglutamate. The protein is N-succinylglutamate 5-semialdehyde dehydrogenase of Escherichia coli (strain SE11).